The primary structure comprises 286 residues: Protease HtpX homolog (286 aa).

Transmembrane regions (helical) follow at residues 6 to 26 (TCFL…YVGG) and 28 to 48 (QGMI…YFFS). His130 lines the Zn(2+) pocket. Residue Glu131 is part of the active site. Residue His134 coordinates Zn(2+). A run of 2 helical transmembrane segments spans residues 140 to 160 (ILTG…ANFA) and 178 to 198 (AIML…QMAI). Position 203 (Glu203) interacts with Zn(2+).

Belongs to the peptidase M48B family. The cofactor is Zn(2+).

Its subcellular location is the cell inner membrane. In Campylobacter curvus (strain 525.92), this protein is Protease HtpX homolog.